Here is a 322-residue protein sequence, read N- to C-terminus: tRNA dimethylallyltransferase (322 aa).

12–19 (GPTAAGKT) is an ATP binding site. Residue 14-19 (TAAGKT) participates in substrate binding. Interaction with substrate tRNA regions lie at residues 37-40 (DSAL) and 160-164 (QRLIR).

The protein belongs to the IPP transferase family. Monomer. Requires Mg(2+) as cofactor.

The catalysed reaction is adenosine(37) in tRNA + dimethylallyl diphosphate = N(6)-dimethylallyladenosine(37) in tRNA + diphosphate. Catalyzes the transfer of a dimethylallyl group onto the adenine at position 37 in tRNAs that read codons beginning with uridine, leading to the formation of N6-(dimethylallyl)adenosine (i(6)A). The polypeptide is tRNA dimethylallyltransferase (Pseudomonas putida (Arthrobacter siderocapsulatus)).